The chain runs to 326 residues: ELMO domain-containing protein 1 (326 aa).

One can recognise an ELMO domain in the interval 133-306 (QHEEMLLKLW…KFRKRIIKQL (174 aa)).

Its function is as follows. Acts as a GTPase-activating protein (GAP) toward guanine nucleotide exchange factors like ARL2, ARL3, ARF1 and ARF6, but not for GTPases outside the Arf family. This chain is ELMO domain-containing protein 1 (ELMOD1), found in Pongo abelii (Sumatran orangutan).